Here is a 621-residue protein sequence, read N- to C-terminus: DEAD-box ATP-dependent RNA helicase 39 (621 aa).

Positions glutamate 112–cysteine 140 match the Q motif motif. The Helicase ATP-binding domain maps to isoleucine 143–leucine 330. ATP is bound at residue serine 156–threonine 163. The DEAD box motif lies at aspartate 270–aspartate 273. Residues lysine 355–arginine 505 form the Helicase C-terminal domain. Positions glutamate 497–serine 621 are disordered. Over residues asparagine 503–proline 537 the composition is skewed to basic and acidic residues. Positions lysine 555–glutamate 572 are enriched in low complexity.

This sequence belongs to the DEAD box helicase family.

The enzyme catalyses ATP + H2O = ADP + phosphate + H(+). This is DEAD-box ATP-dependent RNA helicase 39 (RH39) from Arabidopsis thaliana (Mouse-ear cress).